The following is a 258-amino-acid chain: Imidazole glycerol phosphate synthase subunit HisF (258 aa).

Residues Asp11 and Asp130 contribute to the active site.

Belongs to the HisA/HisF family. As to quaternary structure, heterodimer of HisH and HisF.

It is found in the cytoplasm. It carries out the reaction 5-[(5-phospho-1-deoxy-D-ribulos-1-ylimino)methylamino]-1-(5-phospho-beta-D-ribosyl)imidazole-4-carboxamide + L-glutamine = D-erythro-1-(imidazol-4-yl)glycerol 3-phosphate + 5-amino-1-(5-phospho-beta-D-ribosyl)imidazole-4-carboxamide + L-glutamate + H(+). The protein operates within amino-acid biosynthesis; L-histidine biosynthesis; L-histidine from 5-phospho-alpha-D-ribose 1-diphosphate: step 5/9. Its function is as follows. IGPS catalyzes the conversion of PRFAR and glutamine to IGP, AICAR and glutamate. The HisF subunit catalyzes the cyclization activity that produces IGP and AICAR from PRFAR using the ammonia provided by the HisH subunit. The polypeptide is Imidazole glycerol phosphate synthase subunit HisF (Shigella sonnei (strain Ss046)).